The following is a 254-amino-acid chain: Leucyl/phenylalanyl-tRNA--protein transferase (254 aa).

This sequence belongs to the L/F-transferase family.

It is found in the cytoplasm. The enzyme catalyses N-terminal L-lysyl-[protein] + L-leucyl-tRNA(Leu) = N-terminal L-leucyl-L-lysyl-[protein] + tRNA(Leu) + H(+). It catalyses the reaction N-terminal L-arginyl-[protein] + L-leucyl-tRNA(Leu) = N-terminal L-leucyl-L-arginyl-[protein] + tRNA(Leu) + H(+). It carries out the reaction L-phenylalanyl-tRNA(Phe) + an N-terminal L-alpha-aminoacyl-[protein] = an N-terminal L-phenylalanyl-L-alpha-aminoacyl-[protein] + tRNA(Phe). In terms of biological role, functions in the N-end rule pathway of protein degradation where it conjugates Leu, Phe and, less efficiently, Met from aminoacyl-tRNAs to the N-termini of proteins containing an N-terminal arginine or lysine. This Bordetella bronchiseptica (strain ATCC BAA-588 / NCTC 13252 / RB50) (Alcaligenes bronchisepticus) protein is Leucyl/phenylalanyl-tRNA--protein transferase.